A 182-amino-acid chain; its full sequence is UPF0397 protein SPP_0507 (182 aa).

5 helical membrane passes run 10 to 30 (VVAV…NIPT), 46 to 66 (LLSI…GHAI), 73 to 93 (YGLW…VGLF), 109 to 129 (ILIF…VLAP), and 148 to 168 (IVAG…LLLA).

Belongs to the UPF0397 family.

It localises to the cell membrane. The protein is UPF0397 protein SPP_0507 of Streptococcus pneumoniae (strain P1031).